The primary structure comprises 170 residues: Protein SprT (170 aa).

One can recognise a SprT-like domain in the interval 23–165 (QLANQHLGTD…RECGEKLQFV (143 aa)). His-78 lines the Zn(2+) pocket. Glu-79 is a catalytic residue. His-82 provides a ligand contact to Zn(2+).

Belongs to the SprT family. Zn(2+) serves as cofactor.

The protein localises to the cytoplasm. The sequence is that of Protein SprT from Yersinia enterocolitica serotype O:8 / biotype 1B (strain NCTC 13174 / 8081).